The sequence spans 483 residues: Putative inorganic phosphate cotransporter (483 aa).

7 helical membrane-spanning segments follow: residues 64–84, 90–110, 187–207, 292–312, 349–369, 383–403, and 420–440; these read YILS…GILA, LRFL…VPVA, IFYV…IFVY, LPYL…DWMI, ALTL…YSGF, FLMS…PIAA, and IVFF…NIFG. A disordered region spans residues 447-483; it reads WDNPSEDEQKPALESSSTTNPPRLSNGSSAPRAISSS. The segment covering 460 to 483 has biased composition (polar residues); that stretch reads ESSSTTNPPRLSNGSSAPRAISSS.

This sequence belongs to the major facilitator superfamily. Sodium/anion cotransporter family.

The protein resides in the membrane. Its function is as follows. May be an inorganic phosphate cotransporter. The protein is Putative inorganic phosphate cotransporter (Picot) of Drosophila ananassae (Fruit fly).